A 155-amino-acid chain; its full sequence is MDIRKIKKLIELVEESGITELEVQEEEGTVRISRAAPVIAPAAVQYAAAPVVAPTPAAAPAQVPAAATTAPAASDELSGHLVRSPMVGTFYRSPSPEAKAFVEVGQSVKVGDALCIVEAMKMMNRIEADKAGVVKAILINDGNAVEFDEPLIVIE.

The region spanning 72–155 is the Biotinyl-binding domain; sequence AASDELSGHL…EFDEPLIVIE (84 aa). An N6-biotinyllysine modification is found at Lys121.

As to quaternary structure, homodimer.

It participates in lipid metabolism; fatty acid biosynthesis. In terms of biological role, this protein is a component of the acetyl coenzyme A carboxylase complex; first, biotin carboxylase catalyzes the carboxylation of the carrier protein and then the transcarboxylase transfers the carboxyl group to form malonyl-CoA. The chain is Biotin carboxyl carrier protein of acetyl-CoA carboxylase (accB) from Haemophilus influenzae (strain ATCC 51907 / DSM 11121 / KW20 / Rd).